The following is a 57-amino-acid chain: Small ribosomal subunit protein bS21 (57 aa).

The disordered stretch occupies residues 35–57; that stretch reads REFYEKPSVRRKKKSEAARKRKY. Positions 43–57 are enriched in basic residues; that stretch reads VRRKKKSEAARKRKY.

Belongs to the bacterial ribosomal protein bS21 family.

The polypeptide is Small ribosomal subunit protein bS21 (Bacillus licheniformis (strain ATCC 14580 / DSM 13 / JCM 2505 / CCUG 7422 / NBRC 12200 / NCIMB 9375 / NCTC 10341 / NRRL NRS-1264 / Gibson 46)).